A 71-amino-acid chain; its full sequence is Disintegrin applaggin (71 aa).

The Disintegrin domain maps to 1–71; the sequence is EAGEECDCGS…SAGCPRNPFH (71 aa). 6 cysteine pairs are disulfide-bonded: Cys6–Cys21, Cys8–Cys16, Cys15–Cys38, Cys29–Cys35, Cys34–Cys58, and Cys47–Cys65. The Cell attachment site signature appears at 50–52; that stretch reads RGD.

It belongs to the venom metalloproteinase (M12B) family. P-II subfamily. P-IIa sub-subfamily. Monomer (disintegrin). As to expression, expressed by the venom gland.

The protein localises to the secreted. Functionally, inhibits fibrinogen interaction with platelets. Acts by binding to alpha-IIb/beta-3 (ITGA2B/ITGB3) on the platelet surface and inhibits aggregation induced by ADP, thrombin, platelet-activating factor and collagen. This chain is Disintegrin applaggin, found in Agkistrodon piscivorus piscivorus (Eastern cottonmouth).